A 131-amino-acid polypeptide reads, in one-letter code: Small ribosomal subunit protein eS8 (131 aa).

The disordered stretch occupies residues P15–P36. Basic residues predominate over residues G17–A30.

Belongs to the eukaryotic ribosomal protein eS8 family. Part of the 30S ribosomal subunit.

This chain is Small ribosomal subunit protein eS8, found in Pyrobaculum calidifontis (strain DSM 21063 / JCM 11548 / VA1).